A 354-amino-acid chain; its full sequence is Elongation factor Ts (354 aa).

The tract at residues 81–84 is involved in Mg(2+) ion dislocation from EF-Tu; that stretch reads TDFV.

It belongs to the EF-Ts family.

It is found in the cytoplasm. In terms of biological role, associates with the EF-Tu.GDP complex and induces the exchange of GDP to GTP. It remains bound to the aminoacyl-tRNA.EF-Tu.GTP complex up to the GTP hydrolysis stage on the ribosome. This is Elongation factor Ts from Campylobacter fetus subsp. fetus (strain 82-40).